A 70-amino-acid chain; its full sequence is Conotoxin Cl6.13 (70 aa).

The signal sequence occupies residues 1 to 21 (MKFPLLFISLALAAFLTRVQD). A propeptide spanning residues 22 to 33 (ADSSVISKEKSV) is cleaved from the precursor. 3 disulfides stabilise this stretch: Cys41–Cys58, Cys48–Cys63, and Cys57–Cys68.

As to expression, expressed by the venom duct.

Its subcellular location is the secreted. The protein is Conotoxin Cl6.13 of Californiconus californicus (California cone).